Here is a 988-residue protein sequence, read N- to C-terminus: Transposase for transposon Tn501 (988 aa).

This sequence belongs to the transposase 7 family.

Its function is as follows. Required for transposition of transposon Tn501. This chain is Transposase for transposon Tn501 (tnpA), found in Pseudomonas aeruginosa.